The primary structure comprises 243 residues: MILHLIYGPTCSGKTDMAIQIAQETGWPVVALDRVQCCPQIATGSGRPLESELQSTRRIYLDSRPLTEGILDAESAHRRLIFEVDWRKSEDGLILEGGSISLLNCMAKSPFWRSGFQWHVKRLRLGDSDAFLTRAKQRVAEMFAIREDRPSLLEELAELWNYPAARPILEDIDGYRCAIRFARKHDLAISQLPNIDAGRHVELIEAIANEYLEHALSQERDFPQWPEDGAGQPVCPVTLTRIR.

It catalyses the reaction dimethylallyl diphosphate + AMP = N(6)-(dimethylallyl)adenosine 5'-phosphate + diphosphate. Its function is as follows. Transfers dimethylallyl groups to AMP as part of the biosynthesis of cytokinin phytohormones. The protein is Adenylate dimethylallyltransferase (tzs) of Agrobacterium tumefaciens (strain T37).